Reading from the N-terminus, the 295-residue chain is G1/S-specific cyclin-D1 (295 aa).

The Cyclin N-terminal domain occupies 28-152 (LRAMLKAEET…LLVNKLKWNL (125 aa)). Residues 264–295 (QQSLDPKAAEEEEEEEEADLACTPTDVRDVNI) are disordered. Residue K270 forms a Glycyl lysine isopeptide (Lys-Gly) (interchain with G-Cter in ubiquitin) linkage. Over residues 273–282 (EEEEEEEEAD) the composition is skewed to acidic residues. T286 is modified (phosphothreonine).

The protein belongs to the cyclin family. Cyclin D subfamily. In terms of assembly, interacts with either CDK4 or CDK6 protein kinase to form a serine/threonine kinase holoenzyme complex. The cyclin subunit imparts substrate specificity to the complex. Component of the ternary complex CCND1/CDK4/CDKN1B required for nuclear translocation and modulation of CDK4-mediated kinase activity. Interacts directly with CDKN1B. Can form similar complexes with either CDKN1A or CDKN2A. Interacts with UHRF2; the interaction ubiquitinates CCND1 and appears to occur independently of phosphorylation. Interacts with USP2. Interacts (via cyclin N-terminal domain) with INSM1 (via N-terminal region); the interaction competes with the binding of CCND1 to CDK4 during cell cycle progression and inhibits CDK4 activity. Interacts with CDK4; the interaction is prevented with the binding of CCND1 to INSM1 during cell cycle progression. Post-translationally, phosphorylation at Thr-286 by MAP kinases is required for ubiquitination and degradation by the DCX(AMBRA1) complex. It also plays an essential role for recognition by the FBXO31 component of SCF (SKP1-cullin-F-box) protein ligase complex following DNA damage. Ubiquitinated at Lys-270 by the DCX(AMBRA1) complex during the transition from G1 to S cell phase, leading to its degradation: ubiquitination is dependent on Thr-286 phosphorylation. The DCX(AMBRA1) complex represents the major regulator of CCND1 stability during the G1/S transition. Also ubiquitinated by the SCF(FBXO4) and Cul7-RING(FBXW8) ubiquitin-protein ligase complexes. Following DNA damage it is ubiquitinated by the SCF(FBXO31) protein ligase complex. SCF(FBXO31) ubiquitination is dependent on Thr-286 phosphorylation. Ubiquitinated also by UHRF2 apparently in a phosphorylation-independent manner. Ubiquitination leads to its degradation and G1 arrest. Deubiquitinated by USP2; leading to its stabilization.

It is found in the nucleus. It localises to the cytoplasm. Its subcellular location is the nucleus membrane. In terms of biological role, regulatory component of the cyclin D1-CDK4 (DC) complex that phosphorylates and inhibits members of the retinoblastoma (RB) protein family including RB1 and regulates the cell-cycle during G(1)/S transition. Phosphorylation of RB1 allows dissociation of the transcription factor E2F from the RB/E2F complex and the subsequent transcription of E2F target genes which are responsible for the progression through the G(1) phase. Hypophosphorylates RB1 in early G(1) phase. Cyclin D-CDK4 complexes are major integrators of various mitogenenic and antimitogenic signals. Also a substrate for SMAD3, phosphorylating SMAD3 in a cell-cycle-dependent manner and repressing its transcriptional activity. Component of the ternary complex, cyclin D1/CDK4/CDKN1B, required for nuclear translocation and activity of the cyclin D-CDK4 complex. Exhibits transcriptional corepressor activity with INSM1 on the NEUROD1 and INS promoters in a cell cycle-independent manner. This Canis lupus familiaris (Dog) protein is G1/S-specific cyclin-D1 (CCND1).